Here is a 346-residue protein sequence, read N- to C-terminus: MQFPEIPPLDDALRPVLQAAIDDKTKPLGALGRLEALALQLGLIQGTARPVLRRPTVIVFAADHGVADAGVSAYPAEVTAQMVQNFLAGGAAINVFSRQHGIALEIVDAGVRVPLPAAPGLVNCRIADGTRNFANEPAMTPEQAAAAMTAGMARVLRHAQQGCNVIGFGEMGIANTSAAACLMQRLTGLPLEDCIGRGTGLDDAGLARKREVLAGALARHADAQAPLDVLATFGGFEIAMMAGAFLAAAASRMVILVDGFIATAALLVAQRLDPNVLQYCVFTHCSHERGHRALLAQFDAAPLLALDLRLGEGTGCALAWPLLASAAAFLNEMATFSGAGVSTASP.

Catalysis depends on Glu-312, which acts as the Proton acceptor.

Belongs to the CobT family.

The enzyme catalyses 5,6-dimethylbenzimidazole + nicotinate beta-D-ribonucleotide = alpha-ribazole 5'-phosphate + nicotinate + H(+). It participates in nucleoside biosynthesis; alpha-ribazole biosynthesis; alpha-ribazole from 5,6-dimethylbenzimidazole: step 1/2. Its function is as follows. Catalyzes the synthesis of alpha-ribazole-5'-phosphate from nicotinate mononucleotide (NAMN) and 5,6-dimethylbenzimidazole (DMB). The chain is Nicotinate-nucleotide--dimethylbenzimidazole phosphoribosyltransferase from Cupriavidus taiwanensis (strain DSM 17343 / BCRC 17206 / CCUG 44338 / CIP 107171 / LMG 19424 / R1) (Ralstonia taiwanensis (strain LMG 19424)).